The following is a 254-amino-acid chain: Cyclin homolog (254 aa).

This sequence belongs to the cyclin family. Cyclin D subfamily.

Functionally, may be highly relevant to the process of cellular transformation and rapid T-cell proliferation effected by HVS during latent infections of T-cells in susceptible hosts. This chain is Cyclin homolog (72), found in Saimiriine herpesvirus 2 (strain 11) (SaHV-2).